A 234-amino-acid chain; its full sequence is Ubiquitin thioesterase OTUB2 (234 aa).

An OTU domain is found at 40-231 (TAIRKTKGDG…TSHYNILYAA (192 aa)). D48 is an active-site residue. The active-site Nucleophile is C51. Residue H224 is part of the active site.

It belongs to the peptidase C65 family. In terms of tissue distribution, widely expressed. Expressed at higher level in brain.

It carries out the reaction Thiol-dependent hydrolysis of ester, thioester, amide, peptide and isopeptide bonds formed by the C-terminal Gly of ubiquitin (a 76-residue protein attached to proteins as an intracellular targeting signal).. Hydrolase that can remove conjugated ubiquitin from proteins in vitro and may therefore play an important regulatory role at the level of protein turnover by preventing degradation. Mediates deubiquitination of 'Lys-11'-,'Lys-48'- and 'Lys-63'-linked polyubiquitin chains, with a preference for 'Lys-63'-linked polyubiquitin chains. This Homo sapiens (Human) protein is Ubiquitin thioesterase OTUB2 (OTUB2).